The chain runs to 467 residues: Ribulose bisphosphate carboxylase large chain (467 aa).

A propeptide spanning residues methionine 1–serine 2 is cleaved from the precursor. Proline 3 bears the N-acetylproline mark. Residue lysine 14 is modified to N6,N6,N6-trimethyllysine. Asparagine 123 and threonine 173 together coordinate substrate. Lysine 175 (proton acceptor) is an active-site residue. Lysine 177 contacts substrate. Residues lysine 201, aspartate 203, and glutamate 204 each coordinate Mg(2+). Lysine 201 is subject to N6-carboxylysine. Histidine 294 functions as the Proton acceptor in the catalytic mechanism. The substrate site is built by arginine 295, histidine 327, and serine 379.

It belongs to the RuBisCO large chain family. Type I subfamily. In terms of assembly, heterohexadecamer of 8 large chains and 8 small chains; disulfide-linked. The disulfide link is formed within the large subunit homodimers. Mg(2+) is required as a cofactor. The disulfide bond which can form in the large chain dimeric partners within the hexadecamer appears to be associated with oxidative stress and protein turnover.

It is found in the plastid. It localises to the chloroplast. The enzyme catalyses 2 (2R)-3-phosphoglycerate + 2 H(+) = D-ribulose 1,5-bisphosphate + CO2 + H2O. It catalyses the reaction D-ribulose 1,5-bisphosphate + O2 = 2-phosphoglycolate + (2R)-3-phosphoglycerate + 2 H(+). Its function is as follows. RuBisCO catalyzes two reactions: the carboxylation of D-ribulose 1,5-bisphosphate, the primary event in carbon dioxide fixation, as well as the oxidative fragmentation of the pentose substrate in the photorespiration process. Both reactions occur simultaneously and in competition at the same active site. The polypeptide is Ribulose bisphosphate carboxylase large chain (Serenoa repens (Saw palmetto)).